The primary structure comprises 601 residues: Elongation factor 4 (601 aa).

Residues 6–188 (SHIRNFSIIA…QIVHRVPAPE (183 aa)) form the tr-type G domain. GTP-binding positions include 18-23 (DHGKST) and 135-138 (NKID).

The protein belongs to the TRAFAC class translation factor GTPase superfamily. Classic translation factor GTPase family. LepA subfamily.

The protein resides in the cell inner membrane. The enzyme catalyses GTP + H2O = GDP + phosphate + H(+). Functionally, required for accurate and efficient protein synthesis under certain stress conditions. May act as a fidelity factor of the translation reaction, by catalyzing a one-codon backward translocation of tRNAs on improperly translocated ribosomes. Back-translocation proceeds from a post-translocation (POST) complex to a pre-translocation (PRE) complex, thus giving elongation factor G a second chance to translocate the tRNAs correctly. Binds to ribosomes in a GTP-dependent manner. The protein is Elongation factor 4 of Anaeromyxobacter dehalogenans (strain 2CP-1 / ATCC BAA-258).